The following is a 236-amino-acid chain: Phosphoribosylaminoimidazole-succinocarboxamide synthase (236 aa).

Belongs to the SAICAR synthetase family.

The catalysed reaction is 5-amino-1-(5-phospho-D-ribosyl)imidazole-4-carboxylate + L-aspartate + ATP = (2S)-2-[5-amino-1-(5-phospho-beta-D-ribosyl)imidazole-4-carboxamido]succinate + ADP + phosphate + 2 H(+). Its pathway is purine metabolism; IMP biosynthesis via de novo pathway; 5-amino-1-(5-phospho-D-ribosyl)imidazole-4-carboxamide from 5-amino-1-(5-phospho-D-ribosyl)imidazole-4-carboxylate: step 1/2. The polypeptide is Phosphoribosylaminoimidazole-succinocarboxamide synthase (Chlorobium phaeobacteroides (strain BS1)).